The sequence spans 297 residues: Aspartate carbamoyltransferase catalytic subunit (297 aa).

Carbamoyl phosphate-binding residues include arginine 49 and threonine 50. Residue lysine 77 coordinates L-aspartate. Positions 99, 129, and 132 each coordinate carbamoyl phosphate. L-aspartate is bound by residues arginine 162 and arginine 215. Glycine 256 and proline 257 together coordinate carbamoyl phosphate.

Belongs to the aspartate/ornithine carbamoyltransferase superfamily. ATCase family. Heterododecamer (2C3:3R2) of six catalytic PyrB chains organized as two trimers (C3), and six regulatory PyrI chains organized as three dimers (R2).

The catalysed reaction is carbamoyl phosphate + L-aspartate = N-carbamoyl-L-aspartate + phosphate + H(+). The protein operates within pyrimidine metabolism; UMP biosynthesis via de novo pathway; (S)-dihydroorotate from bicarbonate: step 2/3. In terms of biological role, catalyzes the condensation of carbamoyl phosphate and aspartate to form carbamoyl aspartate and inorganic phosphate, the committed step in the de novo pyrimidine nucleotide biosynthesis pathway. This chain is Aspartate carbamoyltransferase catalytic subunit, found in Legionella pneumophila (strain Lens).